Here is a 331-residue protein sequence, read N- to C-terminus: Putative lipoprotein YerB (331 aa).

The N-terminal stretch at 1–19 (MKKWMTVCALCFVFFLLVS) is a signal peptide. Cys-20 is lipidated: N-palmitoyl cysteine. The S-diacylglycerol cysteine moiety is linked to residue Cys-20. Thr-97 carries the post-translational modification Phosphothreonine. Ser-103 carries the phosphoserine modification.

Interacts with PcrA. The interaction is not essential for cell viability or repair of UV-induced lesions.

The protein localises to the cell membrane. The polypeptide is Putative lipoprotein YerB (yerB) (Bacillus subtilis (strain 168)).